The sequence spans 122 residues: Acidic phospholipase A2 4 (122 aa).

Disulfide bonds link Cys26–Cys115, Cys28–Cys44, Cys43–Cys95, Cys49–Cys122, Cys50–Cys88, Cys57–Cys81, and Cys75–Cys86. Ca(2+) contacts are provided by Phe27, Gly29, and Gly31. The active site involves His47. Asp48 lines the Ca(2+) pocket. The active site involves Asp89.

This sequence belongs to the phospholipase A2 family. Group II subfamily. D49 sub-subfamily. Requires Ca(2+) as cofactor. Expressed by the venom gland.

The protein resides in the secreted. It catalyses the reaction a 1,2-diacyl-sn-glycero-3-phosphocholine + H2O = a 1-acyl-sn-glycero-3-phosphocholine + a fatty acid + H(+). Functionally, snake venom phospholipase A2 (PLA2) that has high lipolytic activity. PLA2 catalyzes the calcium-dependent hydrolysis of the 2-acyl groups in 3-sn-phosphoglycerides. This is Acidic phospholipase A2 4 from Craspedocephalus gramineus (Bamboo pit viper).